Consider the following 640-residue polypeptide: Probable serine/threonine-protein kinase samkA (640 aa).

The SAM domain occupies 21–84 (WNNEKIIKWL…SEFEILKNNY (64 aa)). Positions 73-100 (FKSEFEILKNNYDNNNNNNNNNNNNNNN) form a coiled coil. The disordered stretch occupies residues 84–165 (YDNNNNNNNN…INFNSNSNIT (82 aa)). A Protein kinase domain is found at 191–437 (YEYVESISLG…SKDLQKLSWF (247 aa)). Residues 197–205 (ISLGVFSVV) and lysine 221 each bind ATP. Aspartate 312 acts as the Proton acceptor in catalysis. Residues 448-482 (QELTKSTTNTTTTTTTTTTPPPPPSPSSSSPSMNE) form a disordered region. The segment covering 453 to 465 (STTNTTTTTTTTT) has biased composition (low complexity).

The protein belongs to the protein kinase superfamily. Ser/Thr protein kinase family.

It catalyses the reaction L-seryl-[protein] + ATP = O-phospho-L-seryl-[protein] + ADP + H(+). The enzyme catalyses L-threonyl-[protein] + ATP = O-phospho-L-threonyl-[protein] + ADP + H(+). This chain is Probable serine/threonine-protein kinase samkA (samkA), found in Dictyostelium discoideum (Social amoeba).